We begin with the raw amino-acid sequence, 218 residues long: ATP phosphoribosyltransferase (218 aa).

Belongs to the ATP phosphoribosyltransferase family. Short subfamily. Heteromultimer composed of HisG and HisZ subunits.

It localises to the cytoplasm. It catalyses the reaction 1-(5-phospho-beta-D-ribosyl)-ATP + diphosphate = 5-phospho-alpha-D-ribose 1-diphosphate + ATP. It participates in amino-acid biosynthesis; L-histidine biosynthesis; L-histidine from 5-phospho-alpha-D-ribose 1-diphosphate: step 1/9. Its function is as follows. Catalyzes the condensation of ATP and 5-phosphoribose 1-diphosphate to form N'-(5'-phosphoribosyl)-ATP (PR-ATP). Has a crucial role in the pathway because the rate of histidine biosynthesis seems to be controlled primarily by regulation of HisG enzymatic activity. This chain is ATP phosphoribosyltransferase, found in Synechococcus elongatus (strain ATCC 33912 / PCC 7942 / FACHB-805) (Anacystis nidulans R2).